The sequence spans 187 residues: Transcriptional activator of sulfur metabolism MET28 (187 aa).

Residues 105–168 (DKIKQERRRK…EFWKAKLNDI (64 aa)) enclose the bZIP domain. The tract at residues 106–136 (KIKQERRRKNTEASQRFRIRKKQKNFENMNK) is basic motif. The interval 137 to 151 (LQNLNTQINKLRDRI) is leucine-zipper.

It belongs to the bZIP family. As to quaternary structure, interacts with MET4 to form a heteromeric complex which also includes CBF1. Forms two alternate complexes associating MET28 with MET4 and either MET31 or MET32. Binds to DNA through the MET4-MET28-CBF1 complex.

It localises to the cytoplasm. Its subcellular location is the nucleus. In terms of biological role, acts as an accessory factor in the activation of sulfur amino acids metabolism genes. Possesses no intrinsic transcription activation abilities. Binds to the MET16 promoter as a complex with MET4 and CBF1. Enhances the DNA-binding activity of CBF1. This chain is Transcriptional activator of sulfur metabolism MET28 (MET28), found in Saccharomyces cerevisiae (strain ATCC 204508 / S288c) (Baker's yeast).